The chain runs to 309 residues: Olfactory receptor 4A47 (309 aa).

Over 1-23 (MEPRKNVTDFVLLGFTQNPKEQK) the chain is Extracellular. Asparagine 6 carries N-linked (GlcNAc...) asparagine glycosylation. A helical transmembrane segment spans residues 24–47 (VLFVMFLLFYILTMVGNLLIVVTV). Residues 48–55 (TVSETLGS) are Cytoplasmic-facing. Residues 56–77 (PMYFFLAGLSFIDIIYSSSISP) form a helical membrane-spanning segment. Residues 78–98 (RLISGLFFGNNSISFQSCMAQ) are Extracellular-facing. Asparagine 87 carries N-linked (GlcNAc...) asparagine glycosylation. A disulfide bridge connects residues cysteine 95 and cysteine 187. A helical membrane pass occupies residues 99–118 (LFIEHIFGGSEVFLLLVMAY). The Cytoplasmic segment spans residues 119 to 137 (DCYVAICKPLHYLVIMRQW). Residues 138–156 (VCVVLLVVSWVGGFLHSVF) form a helical membrane-spanning segment. Topologically, residues 157-193 (QLSIIYGLPFCGPNVIDHFFCDMYPLLKLVCTDTHAI) are extracellular. Residues 194-217 (GLLVVANGGLACTIVFLLLLISYG) traverse the membrane as a helical segment. The Cytoplasmic segment spans residues 218–233 (VILHSLKNLSQKGRQK). Residues 234-256 (ALSTCSSHMTVVVFFFVPCIFMY) form a helical membrane-spanning segment. The Extracellular portion of the chain corresponds to 257-267 (ARPARTFPIDK). The helical transmembrane segment at 268 to 287 (SVSVFYTVITPMLNPLIYTL) threads the bilayer. Residues 288 to 309 (RNSEMTSAMKKLWRRDLISSST) are Cytoplasmic-facing.

It belongs to the G-protein coupled receptor 1 family.

Its subcellular location is the cell membrane. In terms of biological role, odorant receptor. This Homo sapiens (Human) protein is Olfactory receptor 4A47 (OR4A47).